Here is a 220-residue protein sequence, read N- to C-terminus: UPF0319 protein YccT (220 aa).

Positions 1-20 (MKTGALATFLALCLPVTVFA) are cleaved as a signal peptide.

Belongs to the UPF0319 family.

In Salmonella paratyphi A (strain ATCC 9150 / SARB42), this protein is UPF0319 protein YccT.